The sequence spans 722 residues: Polyribonucleotide nucleotidyltransferase (722 aa).

Positions 487 and 493 each coordinate Mg(2+). Residues 554–613 (PRMVSFKIHPDKIREVIGKGGATIQALTKETGCSIDIKDDGTVTIASTSAEGMAEAKARI) enclose the KH domain. An S1 motif domain is found at 623 to 691 (GKIYEGPVVK…ERGRLRLSLK (69 aa)).

Belongs to the polyribonucleotide nucleotidyltransferase family. Requires Mg(2+) as cofactor.

The protein localises to the cytoplasm. The catalysed reaction is RNA(n+1) + phosphate = RNA(n) + a ribonucleoside 5'-diphosphate. Functionally, involved in mRNA degradation. Catalyzes the phosphorolysis of single-stranded polyribonucleotides processively in the 3'- to 5'-direction. The protein is Polyribonucleotide nucleotidyltransferase of Polynucleobacter asymbioticus (strain DSM 18221 / CIP 109841 / QLW-P1DMWA-1) (Polynucleobacter necessarius subsp. asymbioticus).